Here is a 195-residue protein sequence, read N- to C-terminus: Recombination protein RecR (195 aa).

The segment at 54–69 adopts a C4-type zinc-finger fold; it reads CTICGSYTEDEICSIC. A Toprim domain is found at 77–172; the sequence is ATICVVGFPQ…NITRLASGLP (96 aa).

This sequence belongs to the RecR family.

Its function is as follows. May play a role in DNA repair. It seems to be involved in an RecBC-independent recombinational process of DNA repair. It may act with RecF and RecO. The sequence is that of Recombination protein RecR from Treponema denticola (strain ATCC 35405 / DSM 14222 / CIP 103919 / JCM 8153 / KCTC 15104).